Reading from the N-terminus, the 211-residue chain is Imidazole glycerol phosphate synthase subunit HisH (211 aa).

The region spanning 4–211 is the Glutamine amidotransferase type-1 domain; sequence RVVILDYGSG…QLLANWVATL (208 aa). Cys-82 (nucleophile) is an active-site residue. Active-site residues include His-192 and Glu-194.

In terms of assembly, heterodimer of HisH and HisF.

The protein localises to the cytoplasm. It carries out the reaction 5-[(5-phospho-1-deoxy-D-ribulos-1-ylimino)methylamino]-1-(5-phospho-beta-D-ribosyl)imidazole-4-carboxamide + L-glutamine = D-erythro-1-(imidazol-4-yl)glycerol 3-phosphate + 5-amino-1-(5-phospho-beta-D-ribosyl)imidazole-4-carboxamide + L-glutamate + H(+). It catalyses the reaction L-glutamine + H2O = L-glutamate + NH4(+). Its pathway is amino-acid biosynthesis; L-histidine biosynthesis; L-histidine from 5-phospho-alpha-D-ribose 1-diphosphate: step 5/9. Its function is as follows. IGPS catalyzes the conversion of PRFAR and glutamine to IGP, AICAR and glutamate. The HisH subunit catalyzes the hydrolysis of glutamine to glutamate and ammonia as part of the synthesis of IGP and AICAR. The resulting ammonia molecule is channeled to the active site of HisF. This is Imidazole glycerol phosphate synthase subunit HisH from Thermobifida fusca (strain YX).